The sequence spans 66 residues: Large ribosomal subunit protein bL33c (66 aa).

The protein belongs to the bacterial ribosomal protein bL33 family.

Its subcellular location is the plastid. It is found in the chloroplast. The sequence is that of Large ribosomal subunit protein bL33c from Populus alba (White poplar).